Here is a 427-residue protein sequence, read N- to C-terminus: 3-phosphoshikimate 1-carboxyvinyltransferase (427 aa).

3-phosphoshikimate contacts are provided by K20, S21, and R25. K20 is a phosphoenolpyruvate binding site. Phosphoenolpyruvate is bound by residues G92 and R120. 3-phosphoshikimate-binding residues include S166, Q168, D312, and K339. Q168 serves as a coordination point for phosphoenolpyruvate. D312 (proton acceptor) is an active-site residue. Positions 343 and 385 each coordinate phosphoenolpyruvate.

The protein belongs to the EPSP synthase family. Monomer.

The protein localises to the cytoplasm. The catalysed reaction is 3-phosphoshikimate + phosphoenolpyruvate = 5-O-(1-carboxyvinyl)-3-phosphoshikimate + phosphate. Its pathway is metabolic intermediate biosynthesis; chorismate biosynthesis; chorismate from D-erythrose 4-phosphate and phosphoenolpyruvate: step 6/7. Catalyzes the transfer of the enolpyruvyl moiety of phosphoenolpyruvate (PEP) to the 5-hydroxyl of shikimate-3-phosphate (S3P) to produce enolpyruvyl shikimate-3-phosphate and inorganic phosphate. This is 3-phosphoshikimate 1-carboxyvinyltransferase from Streptococcus pneumoniae serotype 2 (strain D39 / NCTC 7466).